Here is a 614-residue protein sequence, read N- to C-terminus: Maltose permease MAL31 (614 aa).

The disordered stretch occupies residues M1–S48. The Cytoplasmic portion of the chain corresponds to M1–T108. Residues E38 to S48 are compositionally biased toward basic and acidic residues. A helical transmembrane segment spans residues T109–F129. Topologically, residues Q130–E144 are extracellular. The helical transmembrane segment at I145–L165 threads the bilayer. The Cytoplasmic portion of the chain corresponds to Q166–T180. A helical membrane pass occupies residues L181–L201. A topological domain (extracellular) is located at residue G202. Residues M203–V223 traverse the membrane as a helical segment. The Cytoplasmic portion of the chain corresponds to S224–Y236. Residues Y237 to M257 form a helical membrane-spanning segment. Residues K258 to K272 are Extracellular-facing. A helical membrane pass occupies residues L273–P293. Topologically, residues E294–R364 are cytoplasmic. The helical transmembrane segment at I365–T385 threads the bilayer. At Y386 to A398 the chain is on the extracellular side. The chain crosses the membrane as a helical span at residues F399–A419. Over S420 to D427 the chain is Cytoplasmic. Residues L428 to C448 traverse the membrane as a helical segment. At S449–A460 the chain is on the extracellular side. The chain crosses the membrane as a helical span at residues L461–V481. Over S482 to T493 the chain is Cytoplasmic. A helical membrane pass occupies residues I494–Y514. Over Q515 to K526 the chain is Extracellular. The chain crosses the membrane as a helical span at residues S527 to P547. Residues E548–K614 lie on the Cytoplasmic side of the membrane. The segment at E595–K614 is disordered.

This sequence belongs to the major facilitator superfamily. Sugar transporter (TC 2.A.1.1) family.

The protein localises to the membrane. Functionally, high-affinity uptake of maltose and maltotriose. Also transports turanose but not alpha-methylglucoside, melezitose or trehalose. The polypeptide is Maltose permease MAL31 (MAL31) (Saccharomyces cerevisiae (strain ATCC 204508 / S288c) (Baker's yeast)).